The chain runs to 436 residues: Magnesium transporter MRS2-4 (436 aa).

A disordered region spans residues 1 to 56 (MGKGPLSFRRLSSIRHRKKGSAVKDDSAQTSTPSSPPPPLPIHAGGSAVGATGKAK). Residues 12–21 (SSIRHRKKGS) show a composition bias toward basic residues. Residues 44–53 (AGGSAVGATG) are compositionally biased toward low complexity. Helical transmembrane passes span 372–392 (LTLT…SLFG) and 405–425 (VFGY…MVTL). The short motif at 392–394 (GMN) is the Required for magnesium transport activity element.

It belongs to the CorA metal ion transporter (MIT) (TC 1.A.35.5) family. In terms of tissue distribution, expressed in the whole plant except roots.

It is found in the membrane. In terms of biological role, magnesium transporter that may mediate the influx of magnesium. The polypeptide is Magnesium transporter MRS2-4 (MRS2-4) (Arabidopsis thaliana (Mouse-ear cress)).